Here is a 164-residue protein sequence, read N- to C-terminus: Large ribosomal subunit protein uL10 (164 aa).

Belongs to the universal ribosomal protein uL10 family. Part of the ribosomal stalk of the 50S ribosomal subunit. The N-terminus interacts with L11 and the large rRNA to form the base of the stalk. The C-terminus forms an elongated spine to which L12 dimers bind in a sequential fashion forming a multimeric L10(L12)X complex.

Its function is as follows. Forms part of the ribosomal stalk, playing a central role in the interaction of the ribosome with GTP-bound translation factors. The protein is Large ribosomal subunit protein uL10 of Helicobacter pylori (strain P12).